The following is a 156-amino-acid chain: Small ribosomal subunit protein uS7 (156 aa).

It belongs to the universal ribosomal protein uS7 family. Part of the 30S ribosomal subunit. Contacts proteins S9 and S11.

One of the primary rRNA binding proteins, it binds directly to 16S rRNA where it nucleates assembly of the head domain of the 30S subunit. Is located at the subunit interface close to the decoding center, probably blocks exit of the E-site tRNA. The sequence is that of Small ribosomal subunit protein uS7 from Staphylococcus aureus (strain USA300).